Here is a 95-residue protein sequence, read N- to C-terminus: MLYTLSRSPTQCDLPALLRLTAAGDDLLLLQDGVLAGLAGSAHLELLLNAPISLYALQDDLEARGLTGHFSHKITVIGYNHFVELTEKHRSQMSW.

The protein belongs to the DsrH/TusB family. Heterohexamer, formed by a dimer of trimers. The hexameric TusBCD complex contains 2 copies each of TusB, TusC and TusD. The TusBCD complex interacts with TusE.

The protein localises to the cytoplasm. Part of a sulfur-relay system required for 2-thiolation of 5-methylaminomethyl-2-thiouridine (mnm(5)s(2)U) at tRNA wobble positions. This Serratia proteamaculans (strain 568) protein is Protein TusB.